A 347-amino-acid polypeptide reads, in one-letter code: Dehydratase asqC (347 aa).

The first 18 residues, 1-18 (MRPAILAAFSTLPAAAKA), serve as a signal peptide directing secretion. 7 N-linked (GlcNAc...) asparagine glycosylation sites follow: asparagine 51, asparagine 103, asparagine 131, asparagine 143, asparagine 215, asparagine 264, and asparagine 281.

The catalysed reaction is [(1'E)-5'-(3',3'-dimethyloxiran-2'-yl)-3'-hydroxy-3'-methylpent-1'-en-1'-yl]-quinolinone B = (1'E,3'E)-5-(3,3-dimethyloxiran-2-yl)-3-methylhexa-1,3-dienyl-quinolinone B + H2O. It participates in secondary metabolite biosynthesis. Its pathway is alkaloid biosynthesis. The protein operates within mycotoxin biosynthesis. Functionally, dehydratase; part of the gene cluster that mediates the biosynthesis of the aspoquinolone mycotoxins. Within the pathway, the dehydratase asqC catalyzes the dehydratation of the epoxide at C-3 to produce (1'E,3'E)-5-(3,3-dimethyloxiran-2-yl)-3-methylhexa-1,3-dienyl-quinolinone B. The first step of the pathway is catalyzed by the nonribosomal peptide synthetase asqK that condenses anthranilic acid and O-methyl-L-tyrosine to produce 4'-methoxycyclopeptin. 4'-methoxycyclopeptin is then converted to 4'-methoxydehydrocyclopeptin by the ketoglutarate-dependent dioxygenase asqJ. AsqJ also converts its first product 4'-methoxydehydrocyclopeptin to 4'-methoxycyclopenin. The following conversion of 4'-methoxycyclopenin into 4'-methoxyviridicatin is catalyzed by the cyclopenase asqI. 4'-methoxyviridicatin is the precursor of quinolone natural products, and is further converted to quinolinone B. The prenyltransferase asqH1 then catalyzes the canonical Friedel-Crafts alkylation of quinolinone B with dimethylallyl cation to yield dimethylallyl quinolone, which is subjected to FAD-dependent dehydrogenation by the FAD-linked oxidoreductase asqF to yield conjugated aryl diene. The delta(3') double bond then serves as the site of the second alkylation with DMAPP catalyzed by the prenyltransferase asqH2 to yield a carbenium ion intermediate, which can be attacked by H(2)O to yield a styrenyl quinolone containing a C3'-hydroxyprenyl chain. The FAD-dependent monooxygenase asqG performs epoxidation of the terminal C7'-C8' olefin. Finally, after dehydratation of the epoxide at C3 by asqC, the quinolone epoxide rearrangement protein asqO catalyzes an enzymatic 3-exo-tet cyclization to yield the cyclopropyl-THF ring system in aspoquinolone. This chain is Dehydratase asqC, found in Emericella nidulans (strain FGSC A4 / ATCC 38163 / CBS 112.46 / NRRL 194 / M139) (Aspergillus nidulans).